Reading from the N-terminus, the 292-residue chain is Peroxisomal 2,4-dienoyl-CoA reductase [(3E)-enoyl-CoA-producing] (292 aa).

Alanine 2 is subject to N-acetylalanine. Residues 35 to 40 (GGGSGI), 60 to 64 (RSLPR), and aspartate 86 each bind NADP(+). Arginine 60 lines the substrate pocket. Substrate is bound by residues arginine 88, phenylalanine 118, and 126–128 (SFN). Lysine 151 bears the N6-acetyllysine mark. Residues lysine 182 and 208–214 (PGPISGT) each bind NADP(+). Substrate is bound at residue arginine 219. Serine 287 is subject to Phosphoserine. The Microbody targeting signal signature appears at 290–292 (AKL). Lysine 291 carries the N6-acetyllysine modification.

This sequence belongs to the short-chain dehydrogenases/reductases (SDR) family. 2,4-dienoyl-CoA reductase subfamily. As to quaternary structure, monomer, dimer and oligomer.

It is found in the peroxisome. It catalyses the reaction a (2E,4Z)-dienoyl-CoA + NADPH + H(+) = a 4,5-saturated-(3E)-enoyl-CoA + NADP(+). The enzyme catalyses a (2E,4E)-dienoyl-CoA + NADPH + H(+) = a 4,5-saturated-(3E)-enoyl-CoA + NADP(+). The catalysed reaction is (2E,4E)-hexadienoyl-CoA + NADPH + H(+) = (3E)-hexenoyl-CoA + NADP(+). It carries out the reaction (2E,4E)-decadienoyl-CoA + NADPH + H(+) = (3E)-decenoyl-CoA + NADP(+). It catalyses the reaction (2E,4Z,7Z,10Z,13Z,16Z,19Z)-docosaheptaenoyl-CoA + NADPH + H(+) = (3E,7Z,10Z,13Z,16Z,19Z)-docosahexaenoyl-CoA + NADP(+). Functionally, auxiliary enzyme of beta-oxidation. Participates in the degradation of unsaturated fatty enoyl-CoA esters having double bonds in both even- and odd-numbered positions in peroxisome. Catalyzes the NADP-dependent reduction of 2,4-dienoyl-CoA to yield trans-3-enoyl-CoA. Has activity towards short and medium chain 2,4-dienoyl-CoAs, but also towards 2,4,7,10,13,16,19-docosaheptaenoyl-CoA, suggesting that it does not constitute a rate limiting step in the peroxisomal degradation of docosahexaenoic acid. This is Peroxisomal 2,4-dienoyl-CoA reductase [(3E)-enoyl-CoA-producing] (DECR2) from Pongo abelii (Sumatran orangutan).